The primary structure comprises 602 residues: Zinc finger MYND domain-containing protein 11 (602 aa).

The SAMD1-like winged helix (WH) domain maps to 6–82 (KRRQADTKAI…CKGSKAGIEQ (77 aa)). A PHD-type zinc finger spans residues 100 to 148 (DWYCFECHLPGEVLICDLCFRVYHSKCLSDEFRLRDSSSPWQCPVCRSI). The Bromo domain maps to 149 to 255 (KKKNTNKQEM…KDTCHELDEL (107 aa)). Positions 258, 261, 277, and 281 each coordinate Zn(2+). In terms of domain architecture, PWWP spans 280–331 (NHELVWAKMKGFGFWPAKVMQKEDNQVDVRFFGHHHQRAWIPSENIQDITVN). A Glycyl lysine isopeptide (Lys-Gly) (interchain with G-Cter in SUMO2) cross-link involves residue Lys366. The tract at residues 366–459 (KNEDRGEEEA…MLHRSTQTTN (94 aa)) is disordered. The short motif at 394 to 400 (RAKKGRR) is the Nuclear localization signal element. Residues Lys407 and Lys408 each participate in a glycyl lysine isopeptide (Lys-Gly) (interchain with G-Cter in SUMO2) cross-link. Ser421 carries the post-translational modification Phosphoserine. Over residues 435–459 (SVSTQTKKLSASSPRMLHRSTQTTN) the composition is skewed to polar residues. An interaction with human adenovirus E1A region spans residues 452 to 572 (HRSTQTTNDG…CYNCEEEAMY (121 aa)). Positions 563, 566, 574, 575, 581, 585, 594, and 598 each coordinate Zn(2+). The MYND-type zinc finger occupies 563–598 (CYNCEEEAMYHCCWNTSYCSIKCQQEHWHAEHKRTC).

In terms of assembly, homooligomer; forms homooligomers via its C-terminus. Interacts with histone H3.3 trimethylated at 'Lys-36' (H3.3K36me3). Interacts (via MYND-type zinc finger) with NCOR1. Interacts (via MYND-type zinc finger) with MGA protein (via PXLXP motif). Interacts (via MYND-type zinc finger) with EZH2. Interacts with EMSY and E2F6. Interacts with PIAS1 and UBE2I. (Microbial infection) Interacts (via MYND-type zinc finger) with human adenovirus early E1A protein (via PXLXP motif); this interaction inhibits E1A mediated transactivation. As to quaternary structure, (Microbial infection) Interacts (via MYND-type zinc finger) with Epstein-Barr virus EBNA2 protein (via PXLXP motif). Interacts with Epstein-Barr virus-derived protein LMP1; leading to negatively regulate NF-kappa-B activation by Epstein-Barr virus-derived protein LMP1. Post-translationally, sumoylated following its interaction with PIAS1 and UBE2I. Ubiquitinated, leading to proteasomal degradation. Ubiquitous.

It localises to the nucleus. The protein resides in the chromosome. Its function is as follows. Chromatin reader that specifically recognizes and binds histone H3.3 trimethylated at 'Lys-36' (H3.3K36me3) and regulates RNA polymerase II elongation. Does not bind other histone H3 subtypes (H3.1 or H3.2). Colocalizes with highly expressed genes and functions as a transcription corepressor by modulating RNA polymerase II at the elongation stage. Binds non-specifically to dsDNA. Acts as a tumor-suppressor by repressing a transcriptional program essential for tumor cell growth. (Microbial infection) Inhibits Epstein-Barr virus EBNA2-mediated transcriptional activation and host cell proliferation, through direct interaction. The chain is Zinc finger MYND domain-containing protein 11 from Homo sapiens (Human).